The primary structure comprises 101 residues: MAKLSLINREEKRRKTVEKFAAKRAALIAQINDFKLPEEERMVARLKLQQLPRNASPVRERNRCALTGRPRGVFRKFGLCRNKLRDLAFRGEVPGMTKASW.

It belongs to the universal ribosomal protein uS14 family. Part of the 30S ribosomal subunit. Contacts proteins S3 and S10.

Its function is as follows. Binds 16S rRNA, required for the assembly of 30S particles and may also be responsible for determining the conformation of the 16S rRNA at the A site. The polypeptide is Small ribosomal subunit protein uS14 (Aromatoleum aromaticum (strain DSM 19018 / LMG 30748 / EbN1) (Azoarcus sp. (strain EbN1))).